Reading from the N-terminus, the 1181-residue chain is Cellulose synthase-like protein D5 (1181 aa).

The span at 1–17 (MVKSAASQSPSPVTITV) shows a compositional bias: polar residues. Disordered regions lie at residues 1 to 70 (MVKS…DEGR) and 202 to 229 (KEPYRDINDDPETEEEDEEDEAKPLPQM). Residues 48–59 (SSRATRRTSISS) show a composition bias toward low complexity. Residues 210–222 (DDPETEEEDEEDE) show a composition bias toward acidic residues. Helical transmembrane passes span 312-332 (AIISPYRLLIALRLVALGLFL) and 343-363 (AMWLWGMSTTCELWFALSWLL). D443 is an active-site residue. A coiled-coil region spans residues 497-542 (VRERRRVKREYDEFKVRINSLPEAIRRRSDAYNVHEELRAKKKQME). D884 is a catalytic residue. A run of 6 helical transmembrane segments spans residues 966-986 (LFLIVYCILPAISLFSGQFIV), 991-1011 (ITFLIYLLSITLTLCMLSLLE), 1038-1058 (PAAVLQGLLKVIAGVDISFTL), 1082-1102 (FLMVPPLTIMMVNMIAIAVGL), 1116-1136 (LVGGVFFSFWVLCHLYPFAKG), and 1146-1166 (TIVFVWSGLLSIIVSLLWVYI).

Belongs to the glycosyltransferase 2 family. Plant cellulose synthase-like D subfamily. As to expression, expressed in vascular tissues.

The protein resides in the golgi apparatus membrane. In terms of biological role, involved in stem and root growth. Possesses xylan and homogalacturonan synthase activity. This is Cellulose synthase-like protein D5 (CSLD5) from Arabidopsis thaliana (Mouse-ear cress).